Consider the following 738-residue polypeptide: Wall-associated receptor kinase 4 (738 aa).

An N-terminal signal peptide occupies residues 1–22; sequence MKVQRLFLVAIFCLSYMQLVKG. Topologically, residues 23-335 are extracellular; the sequence is QTLPRCPEKC…PKGNPEYVEW (313 aa). N-linked (GlcNAc...) asparagine glycosylation is found at N34, N56, N109, N115, N132, N182, and N208. In terms of domain architecture, EGF-like 1 spans 232–278; it reads RGETCGQVGEKKCGVNGICSNSASGIGYTCKCKGGFQGNPYLQNGCQ. 6 cysteine pairs are disulfide-bonded: C236–C250, C244–C261, C263–C277, C283–C300, C294–C309, and C311–C324. An EGF-like 2; calcium-binding domain is found at 279–325; the sequence is DINECTTANPIHKHNCSGDSTCENKLGHFRCNCRSRYELNTTTNTCK. N-linked (GlcNAc...) asparagine glycosylation is present at N293. N318 carries an N-linked (GlcNAc...) asparagine glycan. A helical membrane pass occupies residues 336–356; it reads TTIVLGTTIGFLVILLAISCI. At 357-738 the chain is on the cytoplasmic side; sequence EHKMKNTKDT…VAILDIEAGR (382 aa). T399 bears the Phosphothreonine mark. Positions 410–693 constitute a Protein kinase domain; the sequence is YDENRILGQG…RVTKTKHKWS (284 aa). Residues 416–424 and K438 contribute to the ATP site; that span reads LGQGGQGTV. A Phosphotyrosine modification is found at Y483. Residue D535 is the Proton acceptor of the active site. Residues T569 and T574 each carry the phosphothreonine modification. Position 582 is a phosphotyrosine (Y582).

It belongs to the protein kinase superfamily. Ser/Thr protein kinase family. In terms of tissue distribution, strictly expressed in siliques.

The protein localises to the membrane. It carries out the reaction L-seryl-[protein] + ATP = O-phospho-L-seryl-[protein] + ADP + H(+). It catalyses the reaction L-threonyl-[protein] + ATP = O-phospho-L-threonyl-[protein] + ADP + H(+). In terms of biological role, serine/threonine-protein kinase that may function as a signaling receptor of extracellular matrix component. Binding to pectin may have significance in the control of cell expansion, morphogenesis and development. The sequence is that of Wall-associated receptor kinase 4 (WAK4) from Arabidopsis thaliana (Mouse-ear cress).